We begin with the raw amino-acid sequence, 209 residues long: Glycerol-3-phosphate acyltransferase (209 aa).

Helical transmembrane passes span 5–25 (IIGM…LWIG), 50–70 (LGFK…TLAA), 74–94 (YFLG…ASLG), 115–135 (ILLA…IFVL), and 151–171 (AIFI…AGIL).

This sequence belongs to the PlsY family. In terms of assembly, probably interacts with PlsX.

The protein resides in the cell membrane. It carries out the reaction an acyl phosphate + sn-glycerol 3-phosphate = a 1-acyl-sn-glycero-3-phosphate + phosphate. The protein operates within lipid metabolism; phospholipid metabolism. In terms of biological role, catalyzes the transfer of an acyl group from acyl-phosphate (acyl-PO(4)) to glycerol-3-phosphate (G3P) to form lysophosphatidic acid (LPA). This enzyme utilizes acyl-phosphate as fatty acyl donor, but not acyl-CoA or acyl-ACP. The chain is Glycerol-3-phosphate acyltransferase from Limosilactobacillus reuteri (strain DSM 20016) (Lactobacillus reuteri).